A 67-amino-acid chain; its full sequence is uncharacterized protein (67 aa).

The chain crosses the membrane as a helical span at residues Trp4–Phe24.

The protein localises to the membrane. This is an uncharacterized protein from Bacillus anthracis.